Reading from the N-terminus, the 918-residue chain is Chaperone protein ClpC4, chloroplastic (918 aa).

The segment at 266-515 is i; it reads LMEYGTNLTK…RLRNAQCKPS (250 aa). Residues 311–318 and 653–660 contribute to the ATP site; these read GEPGVGKT and GPTGVGKS. The segment at 579-774 is II; the sequence is VTEDDVRHAI…LIVMTTNIGS (196 aa).

It belongs to the ClpA/ClpB family. ClpC subfamily.

It localises to the plastid. The protein localises to the chloroplast. Molecular chaperone that may interact with a ClpP-like protease involved in degradation of denatured proteins in the chloroplast. In Oryza sativa subsp. japonica (Rice), this protein is Chaperone protein ClpC4, chloroplastic (CPLC4).